Consider the following 400-residue polypeptide: Dual-specificity RNA methyltransferase RlmN (400 aa).

E125 serves as the catalytic Proton acceptor. The Radical SAM core domain occupies 131–372; that stretch reads ETDRGTLCVS…VRTPRGRDIL (242 aa). An intrachain disulfide couples C138 to C375. Residues C145, C149, and C152 each coordinate [4Fe-4S] cluster. S-adenosyl-L-methionine is bound by residues 201–202, S233, 255–257, and N332; these read GE and SLH. C375 serves as the catalytic S-methylcysteine intermediate.

Belongs to the radical SAM superfamily. RlmN family. Requires [4Fe-4S] cluster as cofactor.

The protein resides in the cytoplasm. The catalysed reaction is adenosine(2503) in 23S rRNA + 2 reduced [2Fe-2S]-[ferredoxin] + 2 S-adenosyl-L-methionine = 2-methyladenosine(2503) in 23S rRNA + 5'-deoxyadenosine + L-methionine + 2 oxidized [2Fe-2S]-[ferredoxin] + S-adenosyl-L-homocysteine. It carries out the reaction adenosine(37) in tRNA + 2 reduced [2Fe-2S]-[ferredoxin] + 2 S-adenosyl-L-methionine = 2-methyladenosine(37) in tRNA + 5'-deoxyadenosine + L-methionine + 2 oxidized [2Fe-2S]-[ferredoxin] + S-adenosyl-L-homocysteine. Specifically methylates position 2 of adenine 2503 in 23S rRNA and position 2 of adenine 37 in tRNAs. m2A2503 modification seems to play a crucial role in the proofreading step occurring at the peptidyl transferase center and thus would serve to optimize ribosomal fidelity. This chain is Dual-specificity RNA methyltransferase RlmN, found in Bradyrhizobium diazoefficiens (strain JCM 10833 / BCRC 13528 / IAM 13628 / NBRC 14792 / USDA 110).